A 418-amino-acid polypeptide reads, in one-letter code: Glutamyl-tRNA reductase (418 aa).

Residues 49–52 (TCNR), Ser109, 114–116 (EPQ), and Gln120 each bind substrate. Cys50 functions as the Nucleophile in the catalytic mechanism. 189–194 (GAGETI) provides a ligand contact to NADP(+).

Belongs to the glutamyl-tRNA reductase family. In terms of assembly, homodimer.

The enzyme catalyses (S)-4-amino-5-oxopentanoate + tRNA(Glu) + NADP(+) = L-glutamyl-tRNA(Glu) + NADPH + H(+). It participates in porphyrin-containing compound metabolism; protoporphyrin-IX biosynthesis; 5-aminolevulinate from L-glutamyl-tRNA(Glu): step 1/2. Catalyzes the NADPH-dependent reduction of glutamyl-tRNA(Glu) to glutamate 1-semialdehyde (GSA). This Citrobacter koseri (strain ATCC BAA-895 / CDC 4225-83 / SGSC4696) protein is Glutamyl-tRNA reductase.